The sequence spans 341 residues: ATPase GET3 (341 aa).

An ATP-binding site is contributed by 34-41; sequence KGGVGKTT. The active site involves Asp63. ATP is bound by residues Glu245 and Asn272. Zn(2+) is bound by residues Cys283 and Cys286.

This sequence belongs to the arsA ATPase family. Homodimer.

Its subcellular location is the cytoplasm. It localises to the endoplasmic reticulum. In terms of biological role, ATPase required for the post-translational delivery of tail-anchored (TA) proteins to the endoplasmic reticulum. Recognizes and selectively binds the transmembrane domain of TA proteins in the cytosol. This complex then targets to the endoplasmic reticulum by membrane-bound receptors, where the tail-anchored protein is released for insertion. This process is regulated by ATP binding and hydrolysis. ATP binding drives the homodimer towards the closed dimer state, facilitating recognition of newly synthesized TA membrane proteins. ATP hydrolysis is required for insertion. Subsequently, the homodimer reverts towards the open dimer state, lowering its affinity for the membrane-bound receptor, and returning it to the cytosol to initiate a new round of targeting. This is ATPase GET3 from Ajellomyces capsulatus (strain G186AR / H82 / ATCC MYA-2454 / RMSCC 2432) (Darling's disease fungus).